The sequence spans 1319 residues: METPPPDPVSPPPPAADEGSPGGDDGAEDAGGFSAGLDSLWTALFGSPEELEPMWSPPRGFGVGAEFAAAEVEPEIMDVAGGPWDGAPWRSSGVVAGEGAATALVPPTAAAGFAEFEPAAPIDSYPAGAAAASLGDVPEVSALDSGVDCSPDPPPSSSPPVDFDARGFDPVADSAPAMESPLPPSVASSEANLDGRMLDCTLNSVPSPPLASPYEVGLGAEDPIKDSSPSVAWGTTMDAKDPEVDATCANGTALRRSRRIMKIKSAASSMPLNQNGDSSRASKRRVADSRKSRSSEGSKLPAFTGPISVNTVDLINGVKVQGLQEIVAVENVSSSYDNNQKAGGLYNQVVVALPAASNSLLKDKGASVLPRRKTRLASKVLVNSDRVSAISPVVNGGPPVQKSDVCIPTKKHKLAVEECLTSLDGVDGGGIVLCNSKLKSAKSRVVSKTPQGRGRRSPQPPKTQRARTLSVKYLEKLKRAENNNNNGSMSKSPRVPMIPENNGSMSKSPRVPIIPELSTKHELVLDKHMVDSVMLETDDGSCFFVGDAVPDDEARKQWPHRYEINDQIMKKDKRTSSQTFANAGKAVLDVKCHYLQAKVSRYTFCIGECAFVKGPEGKPNYIGRLLEFFETKTGECYFRVQWFFTAEDTVIGEQAQSHDPRRLFYSDLTDDNLLDCIVSKVTIVQVPPSVDGKSKSVPSSDYYYDMKYSIDYSTFSTIEMEDTDDLMQSCYTSRINDKMKKIDVNKKHKSPVLEKMELSLLDLYCGCGGMSTGLCLGARGGGVNLSARWAIDDDEIACESFRNNHPETRVRNETTDDFLELLKEWEKLCKTYVKHSRTKACVDSTTESNNETPDCSTVPPEEFEVWKLVDICFGDPNKVSKHGLYFKVRWKGYGPHHDTWEPVEGLRNCKEAIRDFVIEGHRQRILPRPGDVDVVCGGPPCQGISGYNRNREFEAPFKCEKNKQIIVFMDVVQFLKPKYVYMENVLDILKFADATLARYALSRLVAMHYQARLGIMAAGCYGLPQFRMRVFLLGCHSKEKLPPFPLPTHEAIVKNGCPLAFERNLVGWPNDTPMQLARPIVLEDILSDLPEVANGESRDEMLYVKGPQTEFQRYIRSFNVEVHGPRAHVTKDSKSSKLYDHRPLVLDNDNYQRILQIPKRKGANFRDLSGVIVGPDNVARLDPTKERVLLPSGRPLVLDCILAYENGKSLRPFGRVWWDEVVGTVLTVPNARMQALIHPAQDRLLTIRESARLQGFPDNYRFRGTVKDRYRQIGNAVAVPVGRALGYALAMAYLKKSGDDPLMLLPPNFAFSHDLRGFA.

Residues Met-1–Ala-15 show a composition bias toward pro residues. Disordered regions lie at residues Met-1–Ser-34, Ala-142–Ser-189, Ser-265–Ala-302, and Lys-442–Thr-468. Positions Ala-266–Ser-279 are enriched in polar residues. Residues Arg-285–Glu-296 show a composition bias toward basic and acidic residues. Positions Tyr-602–Glu-719 constitute a BAH domain. The region spanning Leu-758–Lys-1296 is the SAM-dependent MTase C5-type domain. The Chromo domain maps to Phe-863–Arg-928. Residue Cys-941 is part of the active site.

The protein localises to the nucleus. The enzyme catalyses a 2'-deoxycytidine in DNA + S-adenosyl-L-methionine = a 5-methyl-2'-deoxycytidine in DNA + S-adenosyl-L-homocysteine + H(+). Its function is as follows. Involved in CpXpG DNA methylation. This is DNA (cytosine-5)-methyltransferase CMT2 from Oryza sativa subsp. japonica (Rice).